Consider the following 386-residue polypeptide: Galactokinase (386 aa).

35–38 (EHTD) serves as a coordination point for substrate. ATP-binding positions include Ser69 and 125 to 131 (GAGLSSS). The Mg(2+) site is built by Ser131 and Glu163. The active-site Proton acceptor is Asp175. Tyr224 lines the substrate pocket.

This sequence belongs to the GHMP kinase family. GalK subfamily.

The protein localises to the cytoplasm. It catalyses the reaction alpha-D-galactose + ATP = alpha-D-galactose 1-phosphate + ADP + H(+). Its pathway is carbohydrate metabolism; galactose metabolism. Its function is as follows. Catalyzes the transfer of the gamma-phosphate of ATP to D-galactose to form alpha-D-galactose-1-phosphate (Gal-1-P). This is Galactokinase from Vibrio vulnificus (strain CMCP6).